The primary structure comprises 505 residues: Aminoaldehyde dehydrogenase 2 (505 aa).

The Na(+) site is built by Ile-31 and Asp-99. Residues 159–161 (TPW) and 185–188 (KPSE) each bind NAD(+). Residue Leu-189 participates in Na(+) binding. 238 to 242 (GSGPT) is a binding site for NAD(+). Glu-260 serves as the catalytic Proton acceptor. Leu-261 is an NAD(+) binding site. Cys-295 acts as the Nucleophile in catalysis. Residues Glu-394 and Trp-460 each coordinate NAD(+).

This sequence belongs to the aldehyde dehydrogenase family. As to quaternary structure, forms homodimers.

It catalyses the reaction 4-aminobutanal + NAD(+) + H2O = 4-aminobutanoate + NADH + 2 H(+). The enzyme catalyses 3-aminopropanal + NAD(+) + H2O = beta-alanine + NADH + 2 H(+). The catalysed reaction is 4-(trimethylamino)butanal + NAD(+) + H2O = 4-(trimethylamino)butanoate + NADH + 2 H(+). It carries out the reaction 4-guanidinobutanal + NAD(+) + H2O = 4-guanidinobutanoate + NADH + 2 H(+). It functions in the pathway amine and polyamine biosynthesis; betaine biosynthesis via choline pathway; betaine from betaine aldehyde: step 1/1. Dehydrogenase that catalyzes the oxidation of several aminoaldehydes. Metabolizes and detoxifies aldehyde products of polyamine degradation to non-toxic amino acids. Catalyzes the oxidation of 4-aminobutanal and 3-aminopropanal to 4-aminobutanoate and beta-alanine, respectively. Catalyzes the oxidation of 4-(trimethylamino)butanal and 4-guanidinobutanal to 4-trimethylammoniobutanoate and 4-guanidinobutanoate, respectively. This chain is Aminoaldehyde dehydrogenase 2, found in Solanum lycopersicum (Tomato).